The sequence spans 290 residues: Oxaloacetate decarboxylase 2 (290 aa).

S50 contacts substrate. A Mg(2+)-binding site is contributed by D88. The substrate site is built by R159 and H235.

Belongs to the isocitrate lyase/PEP mutase superfamily. Oxaloacetate decarboxylase family. Homotetramer; dimer of dimers. Mg(2+) serves as cofactor.

The enzyme catalyses oxaloacetate + H(+) = pyruvate + CO2. Catalyzes the decarboxylation of oxaloacetate into pyruvate. Seems to play a role in maintaining cellular concentrations of bicarbonate and pyruvate. This chain is Oxaloacetate decarboxylase 2, found in Pseudomonas fluorescens (strain Pf0-1).